A 415-amino-acid chain; its full sequence is Corticotropin-releasing factor receptor 1 (415 aa).

The N-terminal stretch at 1-24 is a signal peptide; the sequence is MLLAKTPCLLLVQVIAAGISFALT. Topologically, residues 25–111 are extracellular; sequence SLQDQCETLQ…CQEILKQEKK (87 aa). Disulfide bonds link Cys-30/Cys-54, Cys-44/Cys-87, and Cys-68/Cys-102. 4 N-linked (GlcNAc...) asparagine glycosylation sites follow: Asn-38, Asn-45, Asn-78, and Asn-90. A helical transmembrane segment spans residues 112–142; it reads TKVHYHIAIVINFLGHSISLCALLVAFILFL. Residues 143-149 are Cytoplasmic-facing; the sequence is RLRSIRC. The chain crosses the membrane as a helical span at residues 150–174; that stretch reads LRNIIHWNLITAFILRNVTWFVMQL. Residues 175-189 are Extracellular-facing; that stretch reads TLSHEAHDSNVVWCR. The cysteines at positions 188 and 258 are disulfide-linked. Residues 190–218 traverse the membrane as a helical segment; the sequence is LVTIAHNYFYVTNFFWMFGEGCYLHTAIV. At 219–225 the chain is on the cytoplasmic side; sequence LTYSTDK. Residues 226-253 form a helical membrane-spanning segment; that stretch reads LRKWMFICIGWCIPFPIIVAWAIGKLYY. The Extracellular segment spans residues 254–269; sequence DNEKCWFGKKAGVYTD. The chain crosses the membrane as a helical span at residues 270-295; it reads FIYQGPVILVLLINFIFLFNIVRILM. Topologically, residues 296 to 306 are cytoplasmic; that stretch reads TKLRASTTSET. A helical membrane pass occupies residues 307–331; sequence IQYRKAVKATLVLLPLLGITYMLFF. At 332–338 the chain is on the extracellular side; it reads VTPGEDE. The helical transmembrane segment at 339 to 368 threads the bilayer; the sequence is ISRIVFIYFNSFLQSFQGFFVSVFYCFLNS. Residues 369–415 are Cytoplasmic-facing; the sequence is EVRSAVRKRWHRWQDKHSIRARVARAMSIPTSPTRISFHSIKQSSAI.

The protein belongs to the G-protein coupled receptor 2 family. As to quaternary structure, interacts (via N-terminal extracellular domain) with CRF and UCN.

The protein resides in the cell membrane. G-protein coupled receptor for CRH (corticotropin-releasing factor) and UCN (urocortin). Has high affinity for CRH and UCN. Ligand binding causes a conformation change that triggers signaling via guanine nucleotide-binding proteins (G proteins) and down-stream effectors, such as adenylate cyclase. Promotes the activation of adenylate cyclase, leading to increased intracellular cAMP levels. This chain is Corticotropin-releasing factor receptor 1 (crhr1), found in Xenopus laevis (African clawed frog).